Reading from the N-terminus, the 112-residue chain is Divalent-cation tolerance protein CutA (112 aa).

Cu cation contacts are provided by C16, H83, and H84.

Belongs to the CutA family. As to quaternary structure, homotrimer. Cu cation is required as a cofactor.

It is found in the cytoplasm. Functionally, involved in resistance toward heavy metals. This is Divalent-cation tolerance protein CutA from Escherichia coli O81 (strain ED1a).